Consider the following 207-residue polypeptide: ATP-dependent Clp protease proteolytic subunit (207 aa).

The active-site Nucleophile is Ser-112. His-137 is an active-site residue.

The protein belongs to the peptidase S14 family. As to quaternary structure, fourteen ClpP subunits assemble into 2 heptameric rings which stack back to back to give a disk-like structure with a central cavity, resembling the structure of eukaryotic proteasomes.

It is found in the cytoplasm. It carries out the reaction Hydrolysis of proteins to small peptides in the presence of ATP and magnesium. alpha-casein is the usual test substrate. In the absence of ATP, only oligopeptides shorter than five residues are hydrolyzed (such as succinyl-Leu-Tyr-|-NHMec, and Leu-Tyr-Leu-|-Tyr-Trp, in which cleavage of the -Tyr-|-Leu- and -Tyr-|-Trp bonds also occurs).. Functionally, cleaves peptides in various proteins in a process that requires ATP hydrolysis. Has a chymotrypsin-like activity. Plays a major role in the degradation of misfolded proteins. The protein is ATP-dependent Clp protease proteolytic subunit of Bacteroides fragilis (strain ATCC 25285 / DSM 2151 / CCUG 4856 / JCM 11019 / LMG 10263 / NCTC 9343 / Onslow / VPI 2553 / EN-2).